We begin with the raw amino-acid sequence, 331 residues long: MKTSRRGRALLAVALNLLALLFATTAFLTTHWCQGTQRVPKPGCGQGGRANCPNSGANATANGTAAPAAAAAAATASGNGPPGGALYSWETGDDRFLFRNFHTGIWYSCEEELSGLGEKCRSFIDLAPASEKGVLWLSVVSEVLYILLLVVGFSLMCLELFHSSNVIDGLKLNAFAAVFTVLSGLLGMVAHMMYTQVFQVTVSLGPEDWRPHSWDYGWSFCLAWGSFTCCMAASVTTLNSYTKTVIEFRHKRKVFEQGYREEPTFIDPEAIKYFRERMEKRDGSEEDFHLDCRHERYPARHQPHMADSWPRSSAQEAPELNRQCWVLGHWV.

The Cytoplasmic portion of the chain corresponds to 1 to 8 (MKTSRRGR). The chain crosses the membrane as a helical span at residues 9-29 (ALLAVALNLLALLFATTAFLT). The Extracellular portion of the chain corresponds to 30–132 (THWCQGTQRV…FIDLAPASEK (103 aa)). The chain crosses the membrane as a helical span at residues 133–153 (GVLWLSVVSEVLYILLLVVGF). Topologically, residues 154 to 173 (SLMCLELFHSSNVIDGLKLN) are cytoplasmic. Residues 174–194 (AFAAVFTVLSGLLGMVAHMMY) traverse the membrane as a helical segment. Residues 195–217 (TQVFQVTVSLGPEDWRPHSWDYG) are Extracellular-facing. The helical transmembrane segment at 218-238 (WSFCLAWGSFTCCMAASVTTL) threads the bilayer. Residues 239–331 (NSYTKTVIEF…RQCWVLGHWV (93 aa)) are Cytoplasmic-facing.

This sequence belongs to the GSG1 family. As to quaternary structure, component of the inner core of AMPAR complex. AMPAR complex consists of an inner core made of 4 pore-forming GluA/GRIA proteins (GRIA1, GRIA2, GRIA3 and GRIA4) and 4 major auxiliary subunits arranged in a twofold symmetry. One of the two pairs of distinct binding sites is occupied either by CNIH2, CNIH3 or CACNG2, CACNG3. The other harbors CACNG2, CACNG3, CACNG4, CACNG8 or GSG1L. This inner core of AMPAR complex is complemented by outer core constituents binding directly to the GluA/GRIA proteins at sites distinct from the interaction sites of the inner core constituents. Outer core constituents include at least PRRT1, PRRT2, CKAMP44/SHISA9, FRRS1L and NRN1. The proteins of the inner and outer core serve as a platform for other, more peripherally associated AMPAR constituents. Alone or in combination, these auxiliary subunits control the gating and pharmacology of the AMPAR complex and profoundly impact their biogenesis and protein processing.

The protein resides in the cell membrane. Its subcellular location is the synapse. Functionally, as a component of the inner core of AMPAR complex, modifies AMPA receptor (AMPAR) gating. The polypeptide is Germ cell-specific gene 1-like protein (GSG1L) (Homo sapiens (Human)).